A 112-amino-acid chain; its full sequence is MDEIVRIVRDSMWYIPNVFMDDGKNEGHVSVNNVCHMYFTFFDVDTSSHLFKLVIKHCDLNKRGNSPLHCYTMNTRFNPSVLKILLHHGMRNFDSKDEKGHHYQSITRSLIY.

It belongs to the orthopoxviruses B25 protein family.

This chain is Truncated ankyrin repeat protein B25, found in Bos taurus (Bovine).